The primary structure comprises 478 residues: G2/mitotic-specific cyclin-B (478 aa).

The disordered stretch occupies residues 1 to 153 (MNENDENGPS…KTIQQEEPPR (153 aa)). Positions 16-31 (AKAAALTTDAPAANGA) are enriched in low complexity. Positions 65 to 74 (DNGETKDAKK) are enriched in basic and acidic residues. The segment covering 77 to 102 (SKTGLTSKATMQSGGVQKLSRSNLSR) has biased composition (polar residues). Positions 110-121 (NNVKKPATEAKR) are enriched in basic and acidic residues. The segment covering 133 to 145 (KRTSSQKSLQEKT) has biased composition (polar residues).

The protein belongs to the cyclin family. Cyclin AB subfamily.

Essential for the control of the cell cycle at the G2/M (mitosis) transition. Interacts with the CDC2 protein kinase to form MPF. G2/M cyclins accumulate steadily during G2 and are abruptly destroyed at mitosis. This chain is G2/mitotic-specific cyclin-B (nimE), found in Emericella nidulans (strain FGSC A4 / ATCC 38163 / CBS 112.46 / NRRL 194 / M139) (Aspergillus nidulans).